The chain runs to 410 residues: Subtilisin-like protease CPC735_003880 (410 aa).

The N-terminal stretch at 1–17 (MKLLKSSLLLLLPFVTA) is a signal peptide. A propeptide spanning residues 18 to 118 (NPIPSEDKDI…VTPDRKVYLA (101 aa)) is cleaved from the precursor. The region spanning 31–118 (RYIVTLKDGI…VTPDRKVYLA (88 aa)) is the Inhibitor I9 domain. The region spanning 127–410 (GYNLGHMSSK…IQEMNETVIA (284 aa)) is the Peptidase S8 domain. The active-site Charge relay system is Asp-159. Asn-182 carries N-linked (GlcNAc...) asparagine glycosylation. The active-site Charge relay system is His-191. N-linked (GlcNAc...) asparagine glycosylation is found at Asn-238, Asn-251, and Asn-338. Ser-347 acts as the Charge relay system in catalysis. An N-linked (GlcNAc...) asparagine glycan is attached at Asn-405.

The protein belongs to the peptidase S8 family.

Its subcellular location is the secreted. In terms of biological role, secreted subtilisin-like serine protease with keratinolytic activity that contributes to pathogenicity. The polypeptide is Subtilisin-like protease CPC735_003880 (Coccidioides posadasii (strain C735) (Valley fever fungus)).